The chain runs to 194 residues: Large ribosomal subunit protein bL9 (194 aa).

This sequence belongs to the bacterial ribosomal protein bL9 family.

Functionally, binds to the 23S rRNA. The chain is Large ribosomal subunit protein bL9 from Rhodopseudomonas palustris (strain BisA53).